A 344-amino-acid chain; its full sequence is DNA integrity scanning protein DisA (344 aa).

The region spanning 1 to 133 (MALLAPGTPI…GRRYLIERPE (133 aa)) is the DAC domain. ATP is bound by residues Gly61 and 92 to 96 (TRHRT).

This sequence belongs to the DisA family. Homooctamer. Requires Mg(2+) as cofactor.

It catalyses the reaction 2 ATP = 3',3'-c-di-AMP + 2 diphosphate. In terms of biological role, participates in a DNA-damage check-point. DisA forms globular foci that rapidly scan along the chromosomes searching for lesions. Its function is as follows. Also has diadenylate cyclase activity, catalyzing the condensation of 2 ATP molecules into cyclic di-AMP (c-di-AMP). c-di-AMP likely acts as a signaling molecule that may couple DNA integrity with a cellular process. This chain is DNA integrity scanning protein DisA, found in Cutibacterium acnes (strain DSM 16379 / KPA171202) (Propionibacterium acnes).